The primary structure comprises 427 residues: Peptidase B (427 aa).

Positions 195 and 200 each coordinate Mn(2+). Lys207 is an active-site residue. Residues Asp218, Asp277, and Glu279 each contribute to the Mn(2+) site. Residue Arg281 is part of the active site.

The protein belongs to the peptidase M17 family. In terms of assembly, homohexamer. Mn(2+) serves as cofactor.

The protein resides in the cytoplasm. It catalyses the reaction Release of an N-terminal amino acid, Xaa, from a peptide or arylamide. Xaa is preferably Glu or Asp but may be other amino acids, including Leu, Met, His, Cys and Gln.. Its function is as follows. Probably plays an important role in intracellular peptide degradation. The polypeptide is Peptidase B (Shigella boydii serotype 18 (strain CDC 3083-94 / BS512)).